We begin with the raw amino-acid sequence, 246 residues long: Myogenic factor 5 (246 aa).

A disordered region spans residues 1 to 38; the sequence is RVRARIPGLSSPEGEFPEDFEPRELPPFGAPAPTEPAC. Residues 73–124 form the bHLH domain; it reads DRRKAATMRERRRLKKVNQAFETLKRCTTANPNQRLPKVEILRNAIRYIESL. The interval 210-246 is disordered; sequence EEPGLPLRHAGSLSPGASIDSGARTPGSPPPRTYQAL. Residues 236–246 show a composition bias toward pro residues; it reads GSPPPRTYQAL.

In terms of assembly, efficient DNA binding requires dimerization with another bHLH protein.

It is found in the nucleus. Its function is as follows. Acts as a transcriptional activator that promotes transcription of muscle-specific target genes and plays a role in muscle differentiation. Induces fibroblasts to differentiate into myoblasts. Probable sequence specific DNA-binding protein. The polypeptide is Myogenic factor 5 (MYF5) (Coturnix japonica (Japanese quail)).